A 546-amino-acid chain; its full sequence is Major facilitator superfamily transporter MPN_077 (546 aa).

The next 12 helical transmembrane spans lie at 2 to 22 (WGLVLLGYVLFVIEWFVIDFI), 62 to 82 (WTITLLRAVGSILCGVMVVKF), 88 to 108 (VMIMMGLMCVCFPFLIIGSPL), 179 to 199 (AFFIIFRSTIAIGGTTLIAYA), 220 to 240 (FWGFNVGLVIVAAPFLIPGVG), 248 to 268 (VWVVTFMILLVFAMLLVFAWF), 305 to 325 (LLAIAGVGTILLINPLTQTWF), 344 to 364 (PILLILWVMGYLLGYFLLSPF), 377 to 397 (FIFTANAVLVLLIVIFAATLG), 401 to 421 (VVGFTFVGIFTFIAGGFGWSL), 442 to 462 (IIFGYVWGFAYVFYSIFDIIT), and 485 to 505 (IAAIVLFVSLLLVINWVIIYL).

It belongs to the major facilitator superfamily.

The protein localises to the cell membrane. This is Major facilitator superfamily transporter MPN_077 from Mycoplasma pneumoniae (strain ATCC 29342 / M129 / Subtype 1) (Mycoplasmoides pneumoniae).